A 317-amino-acid polypeptide reads, in one-letter code: Ret finger protein-like 1 (317 aa).

Residues 40–82 (CPVCSDYLEKPMSLECGCAVCFKCINSLQKEPHGEDLLCCCCS) form an RING-type zinc finger. Residues 107–301 (EPKLKKILQM…DKSVLSICPV (195 aa)) enclose the B30.2/SPRY domain.

Phosphorylated by PKC and CDK1. The antiproliferative effect seems to be positively regulated by PKC phosphorylation and negatively by CDK1 phosphorylation. As to expression, seems to be expressed in prostate and less abundantly in adult brain, fetal liver, and fetal kidney.

The protein localises to the cytoplasm. Its subcellular location is the nucleus. Its function is as follows. Negatively regulates the G2-M phase transition, possibly by promoting cyclin B1/CCNB1 and CDK1 proteasomal degradation and thereby preventing their accumulation during interphase. This chain is Ret finger protein-like 1 (RFPL1), found in Homo sapiens (Human).